Reading from the N-terminus, the 78-residue chain is Large ribosomal subunit protein bL28 (78 aa).

Belongs to the bacterial ribosomal protein bL28 family.

The sequence is that of Large ribosomal subunit protein bL28 from Synechococcus sp. (strain CC9311).